Consider the following 493-residue polypeptide: Angiopoietin-related protein 2 (493 aa).

A signal peptide spans 1–19; sequence MRPLCMTYWWLGLLATVGA. Coiled coils occupy residues 77 to 115 and 152 to 202; these read EVHLENRVHKQELELLNNELLKQKRQIETLQQLVEVDGG and ALEL…QLEE. N-linked (GlcNAc...) asparagine glycans are attached at residues Asn-164 and Asn-192. The Fibrinogen C-terminal domain maps to 269 to 489; the sequence is DKPSGPWRDC…KVVMMIRPNP (221 aa). 2 disulfides stabilise this stretch: Cys-278–Cys-307 and Cys-430–Cys-443.

As to expression, widely expressed in heart, tongue, lung and skeletal muscle. Also found in lower levels in kidney, epididymis and testis.

Its subcellular location is the secreted. Induces sprouting in endothelial cells through an autocrine and paracrine action. This is Angiopoietin-related protein 2 (Angptl2) from Mus musculus (Mouse).